A 919-amino-acid chain; its full sequence is Transcriptional regulatory protein EDS1 (919 aa).

Residues 1 to 54 are disordered; the sequence is MSHHVPNLYGTPIRDPHEHKRNSASMGEVNQSVSSRNCERGSEKGTKQRKKASR. Residues 23–36 show a composition bias toward polar residues; that stretch reads SASMGEVNQSVSSR. The segment covering 37–46 has biased composition (basic and acidic residues); that stretch reads NCERGSEKGT. The segment at residues 56-85 is a DNA-binding region (zn(2)-C6 fungal-type); the sequence is CDQCRRKRIKCRFDKHTGVCQGCLEVGEKC. A disordered region spans residues 297 to 338; it reads AGCPNKKLGTDGRSDKWDKNSTWKPVYRSSNPSHPSTEKNVS. The span at 304-317 shows a compositional bias: basic and acidic residues; it reads LGTDGRSDKWDKNS. The segment covering 318–338 has biased composition (polar residues); the sequence is TWKPVYRSSNPSHPSTEKNVS.

Binds DNA in a sequence-specific manner.

Its subcellular location is the nucleus. The protein is Transcriptional regulatory protein EDS1 (EDS1) of Saccharomyces cerevisiae (strain Lalvin EC1118 / Prise de mousse) (Baker's yeast).